The primary structure comprises 1019 residues: Probable inorganic carbon transporter subunit DabA 1 (1019 aa).

Positions 491 and 493 each coordinate Zn(2+). The tract at residues 624-643 (VPTRLHSPRDEGSAAGGEGQ) is disordered. The Zn(2+) site is built by His676 and Cys691.

This sequence belongs to the inorganic carbon transporter (TC 9.A.2) DabA family. As to quaternary structure, forms a complex with DabB. Zn(2+) serves as cofactor.

It localises to the cell inner membrane. In terms of biological role, part of an energy-coupled inorganic carbon pump. This Sorangium cellulosum (strain So ce56) (Polyangium cellulosum (strain So ce56)) protein is Probable inorganic carbon transporter subunit DabA 1.